A 518-amino-acid chain; its full sequence is Protease Do-like 4, mitochondrial (518 aa).

Residues 1–23 (MLFRFLQTLARFCRFLLISVLGF) constitute a mitochondrion transit peptide. The segment at 98–262 (ESGGSGFVIS…IPTPVIKHFL (165 aa)) is serine protease. Active-site charge relay system residues include H116, D147, and S225. The region spanning 278–358 (DISYQLMENS…HFVSMKKLDE (81 aa)) is the PDZ domain.

It belongs to the peptidase S1C family.

Its subcellular location is the mitochondrion membrane. Functionally, putative serine protease. This chain is Protease Do-like 4, mitochondrial (DEGP4), found in Arabidopsis thaliana (Mouse-ear cress).